A 1422-amino-acid polypeptide reads, in one-letter code: Guanine nucleotide exchange factor subunit RIC1 (1422 aa).

WD repeat units lie at residues 64–103 and 304–343; these read TQFG…GDKY and NKTG…LICT. Disordered stretches follow at residues 442 to 462 and 986 to 1005; these read NPKY…SPFA and SGES…SSSG. The span at 449 to 460 shows a compositional bias: basic and acidic residues; sequence RAERMPRHEKSP. 2 positions are modified to phosphothreonine: Thr-991 and Thr-995. Ser-1014, Ser-1016, Ser-1018, Ser-1036, and Ser-1171 each carry phosphoserine. Residues 1021-1048 are disordered; the sequence is AENVPPGKFGLQKTLSMPTGPSGKRWSK. Disordered stretches follow at residues 1179-1198 and 1355-1422; these read THRD…DAFL and DTFQ…CSVS. Polar residues predominate over residues 1378-1396; that stretch reads GSCSHGSISQSEPGSNNVV. Positions 1403–1412 are enriched in acidic residues; sequence TTQADEEEPL.

This sequence belongs to the RIC1 family. Forms a complex with RGP1; the interaction enhances RAB6A GTPase activity. Interacts (via central domain) with RGP1. Interacts with RAB6A; the interaction is direct with a preference for RAB6A-GDP. Interacts (via C-terminus domain) with RAB33B; the interaction is direct with a preference for RAB33B-GTP. Interacts with GJA1. In terms of tissue distribution, expressed in the eye lens.

The protein resides in the cytoplasm. Its subcellular location is the cytosol. The protein localises to the membrane. In terms of biological role, the RIC1-RGP1 complex acts as a guanine nucleotide exchange factor (GEF), which activates RAB6A by exchanging bound GDP for free GTP, and may thereby be required for efficient fusion of endosome-derived vesicles with the Golgi compartment. The RIC1-RGP1 complex participates in the recycling of mannose-6-phosphate receptors. Required for phosphorylation and localization of GJA1. Is a regulator of procollagen transport and secretion, and is required for correct cartilage morphogenesis and development of the craniofacial skeleton. The polypeptide is Guanine nucleotide exchange factor subunit RIC1 (Mus musculus (Mouse)).